A 323-amino-acid chain; its full sequence is tRNA dimethylallyltransferase (323 aa).

An ATP-binding site is contributed by 12–19 (GPTAAGKT). 14–19 (TAAGKT) is a binding site for substrate. Interaction with substrate tRNA regions lie at residues 37–40 (DSAL) and 161–165 (QRLIR).

The protein belongs to the IPP transferase family. Monomer. Mg(2+) serves as cofactor.

It carries out the reaction adenosine(37) in tRNA + dimethylallyl diphosphate = N(6)-dimethylallyladenosine(37) in tRNA + diphosphate. In terms of biological role, catalyzes the transfer of a dimethylallyl group onto the adenine at position 37 in tRNAs that read codons beginning with uridine, leading to the formation of N6-(dimethylallyl)adenosine (i(6)A). The chain is tRNA dimethylallyltransferase from Pseudomonas entomophila (strain L48).